Consider the following 304-residue polypeptide: tRNA pseudouridine synthase B (304 aa).

Asp47 acts as the Nucleophile in catalysis. A disordered region spans residues 85 to 105; it reads TNTDDGEGEVTETSDARPSDD.

This sequence belongs to the pseudouridine synthase TruB family. Type 1 subfamily.

The catalysed reaction is uridine(55) in tRNA = pseudouridine(55) in tRNA. Responsible for synthesis of pseudouridine from uracil-55 in the psi GC loop of transfer RNAs. In Dinoroseobacter shibae (strain DSM 16493 / NCIMB 14021 / DFL 12), this protein is tRNA pseudouridine synthase B.